Consider the following 409-residue polypeptide: LL-diaminopimelate aminotransferase (409 aa).

Substrate-binding residues include Tyr-15 and Gly-42. Residues Tyr-72, 108–109 (SK), Tyr-132, Asn-187, Tyr-218, and 246–248 (SFS) contribute to the pyridoxal 5'-phosphate site. Lys-109, Tyr-132, and Asn-187 together coordinate substrate. Position 249 is an N6-(pyridoxal phosphate)lysine (Lys-249). Pyridoxal 5'-phosphate contacts are provided by Arg-257 and Asn-292. Substrate is bound by residues Asn-292 and Arg-388.

Belongs to the class-I pyridoxal-phosphate-dependent aminotransferase family. LL-diaminopimelate aminotransferase subfamily. As to quaternary structure, homodimer. Pyridoxal 5'-phosphate serves as cofactor.

The catalysed reaction is (2S,6S)-2,6-diaminopimelate + 2-oxoglutarate = (S)-2,3,4,5-tetrahydrodipicolinate + L-glutamate + H2O + H(+). Its pathway is amino-acid biosynthesis; L-lysine biosynthesis via DAP pathway; LL-2,6-diaminopimelate from (S)-tetrahydrodipicolinate (aminotransferase route): step 1/1. Its function is as follows. Involved in the synthesis of meso-diaminopimelate (m-DAP or DL-DAP), required for both lysine and peptidoglycan biosynthesis. Catalyzes the direct conversion of tetrahydrodipicolinate to LL-diaminopimelate. This is LL-diaminopimelate aminotransferase from Heliobacterium modesticaldum (strain ATCC 51547 / Ice1).